The sequence spans 211 residues: Urease accessory protein UreG (211 aa).

11-18 (GPVGAGKT) lines the GTP pocket.

This sequence belongs to the SIMIBI class G3E GTPase family. UreG subfamily. In terms of assembly, homodimer. UreD, UreF and UreG form a complex that acts as a GTP-hydrolysis-dependent molecular chaperone, activating the urease apoprotein by helping to assemble the nickel containing metallocenter of UreC. The UreE protein probably delivers the nickel.

It is found in the cytoplasm. Functionally, facilitates the functional incorporation of the urease nickel metallocenter. This process requires GTP hydrolysis, probably effectuated by UreG. In Actinobacillus pleuropneumoniae serotype 3 (strain JL03), this protein is Urease accessory protein UreG.